A 213-amino-acid polypeptide reads, in one-letter code: Phosphoribosyl-dephospho-CoA transferase (213 aa).

Residues D135 and D137 contribute to the active site.

This sequence belongs to the MdcG family.

It catalyses the reaction apo-[malonate decarboxylase ACP] + 2'-(5''-triphospho-alpha-D-ribosyl)-3'-dephospho-CoA = holo-[malonate decarboxylase ACP] + diphosphate. Its function is as follows. Transfers 2'-(5-triphosphoribosyl)-3'-dephosphocoenzyme-A to the apo-[acyl-carrier-protein] of the malonate decarboxylase to yield holo-[acyl-carrier-protein]. The sequence is that of Phosphoribosyl-dephospho-CoA transferase from Xanthomonas euvesicatoria pv. vesicatoria (strain 85-10) (Xanthomonas campestris pv. vesicatoria).